We begin with the raw amino-acid sequence, 310 residues long: Beta-ketoacyl-[acyl-carrier-protein] synthase III (310 aa).

Residues cysteine 116 and histidine 239 contribute to the active site. An ACP-binding region spans residues 240–244 (QANYR). Residue asparagine 269 is part of the active site.

It belongs to the thiolase-like superfamily. FabH family. In terms of assembly, homodimer.

The protein localises to the cytoplasm. The enzyme catalyses malonyl-[ACP] + acetyl-CoA + H(+) = 3-oxobutanoyl-[ACP] + CO2 + CoA. It functions in the pathway lipid metabolism; fatty acid biosynthesis. Its function is as follows. Catalyzes the condensation reaction of fatty acid synthesis by the addition to an acyl acceptor of two carbons from malonyl-ACP. Catalyzes the first condensation reaction which initiates fatty acid synthesis and may therefore play a role in governing the total rate of fatty acid production. Possesses both acetoacetyl-ACP synthase and acetyl transacylase activities. Its substrate specificity determines the biosynthesis of branched-chain and/or straight-chain of fatty acids. The chain is Beta-ketoacyl-[acyl-carrier-protein] synthase III from Acholeplasma laidlawii (strain PG-8A).